A 504-amino-acid chain; its full sequence is 5-epiaristolochene 1,3-dihydroxylase (504 aa).

A helical transmembrane segment spans residues 2 to 22 (QFFSLVSIFLFLSFLFLLRKW). Cys-442 provides a ligand contact to heme.

It belongs to the cytochrome P450 family. The cofactor is heme.

Its subcellular location is the membrane. It catalyses the reaction (+)-5-epi-aristolochene + 2 reduced [NADPH--hemoprotein reductase] + 2 O2 = capsidiol + 2 oxidized [NADPH--hemoprotein reductase] + 2 H2O + 2 H(+). Inhibited by ancymidol and ketoconazole. In terms of biological role, involved in the biosynthesis of capsidiol. Catalyzes the successive and independent hydroxylations at the C1 and C3 positions of 5-epiaristolochene. The second hydroxylation step is 8-fold more efficient than the first hydroxylation reaction. Capable of utilizing premnaspirodiene as a substrate. This chain is 5-epiaristolochene 1,3-dihydroxylase (CYP71D20), found in Nicotiana tabacum (Common tobacco).